The sequence spans 600 residues: Rhesus-like glycoprotein B (600 aa).

The Cytoplasmic portion of the chain corresponds to 1-16; sequence MSKDEHKLPLSKRKES. The chain crosses the membrane as a helical span at residues 17 to 37; the sequence is IIFMMILFAFQVFMVVLFSVW. The Extracellular portion of the chain corresponds to 38–73; sequence VRYSKNEVNYSTLTPEQLQELEATGGVVQEEVTNIY. A glycan (N-linked (GlcNAc...) asparagine) is linked at Asn-46. A helical transmembrane segment spans residues 74 to 94; that stretch reads GYFRDINIMIFFGFGFLMTFL. At 95–102 the chain is on the cytoplasmic side; that stretch reads RRYGYSAL. Residues 103 to 123 traverse the membrane as a helical segment; the sequence is GYTFIISALVAQWSVLIYGFF. Residues 124–145 lie on the Extracellular side of the membrane; it reads ETVDHKNDHGGDYASTFEMSQT. A helical membrane pass occupies residues 146–166; sequence VLLQGLFCAGAVMISYGAVLG. Topologically, residues 167–170 are cytoplasmic; it reads RVTP. Residues 171–191 form a helical membrane-spanning segment; sequence LQMLVVGIFEPIFYFLNMFIG. Residues 192–199 lie on the Extracellular side of the membrane; sequence EMNLEAID. A helical transmembrane segment spans residues 200–220; that stretch reads VGGGMYIHLFGSVFGLTIAWF. Over 221–240 the chain is Cytoplasmic; that stretch reads LTDKKSKDCEDNSPSYTGDY. The helical transmembrane segment at 241–261 threads the bilayer; that stretch reads FAMAGTLFLWMMWPSFNAAIA. Topologically, residues 262–274 are extracellular; the sequence is PLGEPQFRAIANT. Residues 275 to 295 traverse the membrane as a helical segment; sequence FLSLTASTIATFIVTRLFGHL. The Cytoplasmic segment spans residues 296–303; sequence GHKIDMVH. Residues 304 to 323 form a helical membrane-spanning segment; the sequence is VQNSSLAGGVVQGCLAHMNI. At 324–325 the chain is on the extracellular side; the sequence is NP. The chain crosses the membrane as a helical span at residues 326-346; the sequence is GGAIGMGFLAGVISVIGYLFI. Residues 347–361 are Cytoplasmic-facing; that stretch reads SPFLQRRFNIQDTCG. The chain crosses the membrane as a helical span at residues 362–382; it reads IHNLHFMPGFIGSIAACIAAW. Residues 383–411 are Extracellular-facing; it reads KGLNDRSLYNPIEFNQIFRAGEDQARNNA. A helical transmembrane segment spans residues 412-432; the sequence is AATFISIGIAIAGGLFVGMIL. The Cytoplasmic portion of the chain corresponds to 433–600; sequence KALKKVGGLK…SSTNSPTSKV (168 aa). The segment at 471–600 is disordered; that stretch reads NLPMPTTDNG…SSTNSPTSKV (130 aa). The segment covering 498 to 510 has biased composition (basic and acidic residues); that stretch reads NKKENGYRRDLIR. Low complexity predominate over residues 519–529; it reads EQSTDSSYSDS. Positions 540–554 are enriched in basic residues; the sequence is RIRKLAKKSYRRSKK. Over residues 555-566 the composition is skewed to basic and acidic residues; sequence SHSEHQPQHQPE. Over residues 571 to 580 the composition is skewed to low complexity; the sequence is NNNNNNNNNN. Over residues 581-600 the composition is skewed to polar residues; it reads ATAETTDNGGSSTNSPTSKV.

The protein belongs to the ammonium transporter (TC 2.A.49) family. Rh subfamily.

It localises to the membrane. May be a carbon dioxide/bicarbonate transporter. The sequence is that of Rhesus-like glycoprotein B (rhgB) from Dictyostelium discoideum (Social amoeba).